Reading from the N-terminus, the 136-residue chain is NADPH-dependent 7-cyano-7-deazaguanine reductase (136 aa).

Catalysis depends on Cys-50, which acts as the Thioimide intermediate. Asp-57 acts as the Proton donor in catalysis. Substrate contacts are provided by residues Tyr-72–Leu-74 and His-91–Glu-92.

It belongs to the GTP cyclohydrolase I family. QueF type 1 subfamily.

The protein localises to the cytoplasm. The catalysed reaction is 7-aminomethyl-7-carbaguanine + 2 NADP(+) = 7-cyano-7-deazaguanine + 2 NADPH + 3 H(+). Its pathway is tRNA modification; tRNA-queuosine biosynthesis. Functionally, catalyzes the NADPH-dependent reduction of 7-cyano-7-deazaguanine (preQ0) to 7-aminomethyl-7-deazaguanine (preQ1). This chain is NADPH-dependent 7-cyano-7-deazaguanine reductase, found in Prochlorococcus marinus (strain MIT 9312).